The chain runs to 379 residues: Protein RecA (379 aa).

Residue 79–86 (GPESSGKT) coordinates ATP.

This sequence belongs to the RecA family.

The protein resides in the cytoplasm. Functionally, can catalyze the hydrolysis of ATP in the presence of single-stranded DNA, the ATP-dependent uptake of single-stranded DNA by duplex DNA, and the ATP-dependent hybridization of homologous single-stranded DNAs. It interacts with LexA causing its activation and leading to its autocatalytic cleavage. The polypeptide is Protein RecA (Streptococcus thermophilus).